Consider the following 81-residue polypeptide: Small ribosomal subunit protein bS16 (81 aa).

Belongs to the bacterial ribosomal protein bS16 family.

The protein is Small ribosomal subunit protein bS16 of Lachnoclostridium phytofermentans (strain ATCC 700394 / DSM 18823 / ISDg) (Clostridium phytofermentans).